The chain runs to 105 residues: Large ribosomal subunit protein uL24 (105 aa).

The protein belongs to the universal ribosomal protein uL24 family. As to quaternary structure, part of the 50S ribosomal subunit.

Functionally, one of two assembly initiator proteins, it binds directly to the 5'-end of the 23S rRNA, where it nucleates assembly of the 50S subunit. Its function is as follows. One of the proteins that surrounds the polypeptide exit tunnel on the outside of the subunit. This Clostridium botulinum (strain ATCC 19397 / Type A) protein is Large ribosomal subunit protein uL24.